A 129-amino-acid chain; its full sequence is Cytochrome c oxidase subunit 5B, mitochondrial (129 aa).

The N-terminal 31 residues, 1–31 (MASRLLRGAGALAAQTLRARGPNGVAVVRSM), are a transit peptide targeting the mitochondrion. An N6-acetyllysine mark is found at K68 and K86. 4 residues coordinate Zn(2+): C91, C93, C113, and C116. The residue at position 121 (K121) is an N6-acetyllysine.

Belongs to the cytochrome c oxidase subunit 5B family. Component of the cytochrome c oxidase (complex IV, CIV), a multisubunit enzyme composed of 14 subunits. The complex is composed of a catalytic core of 3 subunits MT-CO1, MT-CO2 and MT-CO3, encoded in the mitochondrial DNA, and 11 supernumerary subunits COX4I, COX5A, COX5B, COX6A, COX6B, COX6C, COX7A, COX7B, COX7C, COX8 and NDUFA4, which are encoded in the nuclear genome. The complex exists as a monomer or a dimer and forms supercomplexes (SCs) in the inner mitochondrial membrane with NADH-ubiquinone oxidoreductase (complex I, CI) and ubiquinol-cytochrome c oxidoreductase (cytochrome b-c1 complex, complex III, CIII), resulting in different assemblies (supercomplex SCI(1)III(2)IV(1) and megacomplex MCI(2)III(2)IV(2)).

The protein localises to the mitochondrion inner membrane. It participates in energy metabolism; oxidative phosphorylation. Its function is as follows. Component of the cytochrome c oxidase, the last enzyme in the mitochondrial electron transport chain which drives oxidative phosphorylation. The respiratory chain contains 3 multisubunit complexes succinate dehydrogenase (complex II, CII), ubiquinol-cytochrome c oxidoreductase (cytochrome b-c1 complex, complex III, CIII) and cytochrome c oxidase (complex IV, CIV), that cooperate to transfer electrons derived from NADH and succinate to molecular oxygen, creating an electrochemical gradient over the inner membrane that drives transmembrane transport and the ATP synthase. Cytochrome c oxidase is the component of the respiratory chain that catalyzes the reduction of oxygen to water. Electrons originating from reduced cytochrome c in the intermembrane space (IMS) are transferred via the dinuclear copper A center (CU(A)) of subunit 2 and heme A of subunit 1 to the active site in subunit 1, a binuclear center (BNC) formed by heme A3 and copper B (CU(B)). The BNC reduces molecular oxygen to 2 water molecules using 4 electrons from cytochrome c in the IMS and 4 protons from the mitochondrial matrix. The sequence is that of Cytochrome c oxidase subunit 5B, mitochondrial (COX5B) from Sus scrofa (Pig).